Reading from the N-terminus, the 243-residue chain is MILFPAIDLKDGLAVRLEQGDMDRATVFNRDPASQAGEFEALGFRYLHLVDLNGAFAGHPVNAAAVDRILETVSIPVQLGGGIRDMKTVDGWLEKGVTRVILGTAAVRDPDFVKAAAKAHPGRVVVGLDARDGNVAVQGWAETSNLPAVDIARRFEDAGVSAIIYTDIARDGLLKGLNMDATIALADAVSIPVIASGGLASLADVEALLEPRAKKLAGAITGRALYDGRLDPGAALALVAGRS.

Catalysis depends on D8, which acts as the Proton acceptor. D129 (proton donor) is an active-site residue.

It belongs to the HisA/HisF family.

It localises to the cytoplasm. The enzyme catalyses 1-(5-phospho-beta-D-ribosyl)-5-[(5-phospho-beta-D-ribosylamino)methylideneamino]imidazole-4-carboxamide = 5-[(5-phospho-1-deoxy-D-ribulos-1-ylimino)methylamino]-1-(5-phospho-beta-D-ribosyl)imidazole-4-carboxamide. It participates in amino-acid biosynthesis; L-histidine biosynthesis; L-histidine from 5-phospho-alpha-D-ribose 1-diphosphate: step 4/9. The chain is 1-(5-phosphoribosyl)-5-[(5-phosphoribosylamino)methylideneamino] imidazole-4-carboxamide isomerase from Azorhizobium caulinodans (strain ATCC 43989 / DSM 5975 / JCM 20966 / LMG 6465 / NBRC 14845 / NCIMB 13405 / ORS 571).